We begin with the raw amino-acid sequence, 288 residues long: Bifunctional protein FolD (288 aa).

Residues 166 to 168 and Ile232 contribute to the NADP(+) site; that span reads GAS.

It belongs to the tetrahydrofolate dehydrogenase/cyclohydrolase family. In terms of assembly, homodimer.

The catalysed reaction is (6R)-5,10-methylene-5,6,7,8-tetrahydrofolate + NADP(+) = (6R)-5,10-methenyltetrahydrofolate + NADPH. It catalyses the reaction (6R)-5,10-methenyltetrahydrofolate + H2O = (6R)-10-formyltetrahydrofolate + H(+). It functions in the pathway one-carbon metabolism; tetrahydrofolate interconversion. Its function is as follows. Catalyzes the oxidation of 5,10-methylenetetrahydrofolate to 5,10-methenyltetrahydrofolate and then the hydrolysis of 5,10-methenyltetrahydrofolate to 10-formyltetrahydrofolate. The chain is Bifunctional protein FolD from Klebsiella pneumoniae (strain 342).